The chain runs to 372 residues: Fork head domain-containing protein FD4 (372 aa).

The fork-head DNA-binding region spans 12 to 103 (QKPPYSYISL…FDMFENGSLL (92 aa)). Disordered stretches follow at residues 225 to 245 (ESLI…DEDD) and 261 to 281 (PTTP…RTED).

In terms of tissue distribution, expressed in early embryogenesis in 14 symmetrical pairs of segmentally arranged neuroblasts. Also, later in embryogenesis, in a cluster of cells in head region.

The protein localises to the nucleus. Involved in development during embryogenesis. This Drosophila melanogaster (Fruit fly) protein is Fork head domain-containing protein FD4 (fd96Ca).